Reading from the N-terminus, the 631-residue chain is DNA mismatch repair protein MutL (631 aa).

This sequence belongs to the DNA mismatch repair MutL/HexB family.

This protein is involved in the repair of mismatches in DNA. It is required for dam-dependent methyl-directed DNA mismatch repair. May act as a 'molecular matchmaker', a protein that promotes the formation of a stable complex between two or more DNA-binding proteins in an ATP-dependent manner without itself being part of a final effector complex. The chain is DNA mismatch repair protein MutL from Lactobacillus acidophilus (strain ATCC 700396 / NCK56 / N2 / NCFM).